The sequence spans 277 residues: S-formylglutathione hydrolase FrmB (277 aa).

Active-site charge relay system residues include Ser-145, Asp-221, and His-254.

Belongs to the esterase D family.

The catalysed reaction is S-formylglutathione + H2O = formate + glutathione + H(+). Its function is as follows. Serine hydrolase involved in the detoxification of formaldehyde. Hydrolyzes S-formylglutathione to glutathione and formate. The polypeptide is S-formylglutathione hydrolase FrmB (frmB) (Escherichia coli O6:K15:H31 (strain 536 / UPEC)).